Consider the following 418-residue polypeptide: MYIRINESRGESTSLDNRLISASRVPSVSSSARFLSTCAESSRLRVSTSLRSSSRSLFASVNSREIAAVPFVYTIAGMEDVIITLGIDDTVYFLEWAILSINDVLSLIKRPGVKFTTVDTSNTSTVTIAVPATMDPMERLFVWTEGYHGVFMDDLRKGATYEWLCVLASTAGVLSPMDPPMPSLLDRFTDSDELEIFVHLGRNIEINGATALWDRTVRYAFVPPSIELRFKNVWNAILKGGGDPRSVMDRDAVTVCSTVGADALVVLPRGDGDDEVPVVAVRNADRYLEELSERSTNRTVTEILAAPTPPFPIPNFGIGVLTDRVKGLCEVFIIIKDSDRWMFDRYTFALNTCMIGNVISNGLGIYETTLAGLERTLQPPAPTSRPRFVCVVRDGSHTEAGQPVGALGKCQAKPRNLW.

This is an uncharacterized protein from Ictalurid herpesvirus 1 (strain Auburn) (IcHV-1).